Consider the following 251-residue polypeptide: Protein phosphatase 1 regulatory subunit 35 (251 aa).

Disordered stretches follow at residues 58–99 (LITV…QQTH) and 180–235 (PALA…VPRP). The span at 76–99 (PNKDEHGVETDREQSRECDGQQTH) shows a compositional bias: basic and acidic residues.

This sequence belongs to the PPP1R35 family.

The protein resides in the cytoplasm. It localises to the cytoskeleton. It is found in the microtubule organizing center. Its subcellular location is the centrosome. The protein localises to the centriole. Its function is as follows. During centriole duplication, may play a role in the centriole elongation by promoting the recruitment of the microtubule-binding elongation machinery, leading to the centriole to centrosome conversion. In addition may play a role in the primary cilia assembly. The chain is Protein phosphatase 1 regulatory subunit 35 from Danio rerio (Zebrafish).